Consider the following 61-residue polypeptide: MAKKSMIAKNKRPAKYSTQAYTRCEKCGRPHSVYRKFKLCRVCFRELAYKGQIPGVVKASW.

Positions 24, 27, 40, and 43 each coordinate Zn(2+).

It belongs to the universal ribosomal protein uS14 family. Zinc-binding uS14 subfamily. Part of the 30S ribosomal subunit. Contacts proteins S3 and S10. Zn(2+) is required as a cofactor.

Its function is as follows. Binds 16S rRNA, required for the assembly of 30S particles and may also be responsible for determining the conformation of the 16S rRNA at the A site. In Streptococcus equi subsp. zooepidemicus (strain H70), this protein is Small ribosomal subunit protein uS14.